A 241-amino-acid chain; its full sequence is Histidine utilization repressor (241 aa).

Positions 11 to 79 (APFYEKVKQA…QGVGTFVAEP (69 aa)) constitute an HTH gntR-type domain. The H-T-H motif DNA-binding region spans 39–58 (EAELVAQFGFSRMTINRALR).

It functions in the pathway amino-acid degradation; L-histidine degradation into L-glutamate [regulation]. Its function is as follows. Repressor which binds to the hutP region in the histidine utilization (hut) operon. It blocks the expression of all the hut genes in the absence of inducer. The polypeptide is Histidine utilization repressor (hutC) (Klebsiella aerogenes (Enterobacter aerogenes)).